Here is a 226-residue protein sequence, read N- to C-terminus: DELTA-thalatoxin-Avl1b (226 aa).

The signal sequence occupies residues Met1–Ala21. Residues Lys22 to Glu45 constitute a propeptide that is removed on maturation. The plays an important role in the hemolytic activity stretch occupies residues Ala50–Gly59. The interval Gly58–Asp77 is N-terminal region. Phosphocholine contacts are provided by Ser101, Val134, Ser152, Pro154, Tyr180, and Tyr184. A trp-rich region, which is important for the binding to lipid membrane region spans residues Ser152–Lys167. Residues Lys191–Ser193 carry the Cell attachment site, crucial for protein stability motif.

This sequence belongs to the actinoporin family. Sea anemone subfamily. As to quaternary structure, octamer or nonamer in membranes. Monomer in the soluble state.

The protein localises to the secreted. The protein resides in the nematocyst. Its subcellular location is the target cell membrane. Pore-forming protein that forms cations-selective hydrophilic pores of around 1 nm and causes cytolysis. Pore formation is a multi-step process that involves specific recognition of membrane sphingomyelin (but neither cholesterol nor phosphatidylcholine) using aromatic rich region and adjacent phosphocholine (POC) binding site, firm binding to the membrane (mainly driven by hydrophobic interactions) accompanied by the transfer of the N-terminal region to the lipid-water interface and finally pore formation after oligomerization of monomers. This chain is DELTA-thalatoxin-Avl1b, found in Actineria villosa (Okinawan sea anemone).